A 323-amino-acid chain; its full sequence is tRNA-modifying protein YgfZ (323 aa).

Positions 29 and 182 each coordinate folate.

The protein belongs to the tRNA-modifying YgfZ family.

The protein resides in the cytoplasm. Folate-binding protein involved in regulating the level of ATP-DnaA and in the modification of some tRNAs. It is probably a key factor in regulatory networks that act via tRNA modification, such as initiation of chromosomal replication. This chain is tRNA-modifying protein YgfZ, found in Vibrio atlanticus (strain LGP32) (Vibrio splendidus (strain Mel32)).